The sequence spans 250 residues: Aquaporin TIP2-2 (250 aa).

Helical transmembrane passes span 22 to 42 (VAEFIATLLFVFAGVGSAIAF) and 54 to 74 (AGLVAIAVAHALALFVGVSVA). The short motif at 83–85 (NPA) is the NPA 1 element. 3 helical membrane-spanning segments follow: residues 97 to 119 (TVLTGLFYWVAQLLGASVACLLL), 142 to 162 (GVVFEIVITFALVYTVYATAA), and 169 to 189 (LGTIAPIAIGFIVGANILAAG). Positions 197 to 199 (NPA) match the NPA 2 motif. A helical membrane pass occupies residues 218-238 (WVGPLIGGGLAGLVYGDVFIG).

It belongs to the MIP/aquaporin (TC 1.A.8) family. TIP (TC 1.A.8.10) subfamily.

It is found in the vacuole membrane. Functionally, aquaporins facilitate the transport of water and small neutral solutes across cell membranes. The chain is Aquaporin TIP2-2 (TIP2-2) from Zea mays (Maize).